Consider the following 232-residue polypeptide: 2,3,4,5-tetrahydropyridine-2,6-dicarboxylate N-acetyltransferase (232 aa).

Belongs to the transferase hexapeptide repeat family. DapH subfamily.

The enzyme catalyses (S)-2,3,4,5-tetrahydrodipicolinate + acetyl-CoA + H2O = L-2-acetamido-6-oxoheptanedioate + CoA. It functions in the pathway amino-acid biosynthesis; L-lysine biosynthesis via DAP pathway; LL-2,6-diaminopimelate from (S)-tetrahydrodipicolinate (acetylase route): step 1/3. Functionally, catalyzes the transfer of an acetyl group from acetyl-CoA to tetrahydrodipicolinate. The protein is 2,3,4,5-tetrahydropyridine-2,6-dicarboxylate N-acetyltransferase of Streptococcus pneumoniae (strain Taiwan19F-14).